The primary structure comprises 632 residues: Pescadillo homolog (632 aa).

Residues 306-341 form a disordered region; that stretch reads GDDADVDMDEGAKETDEEEDEDFVERPSKAQEVDDV. Residues 307-328 are compositionally biased toward acidic residues; it reads DDADVDMDEGAKETDEEEDEDF. The BRCT domain occupies 361–459; it reads RQNLLFSPYT…KIISSEGYGP (99 aa). Disordered regions lie at residues 485 to 535, 565 to 585, and 601 to 632; these read GEKA…QNPS, TKVH…EEDL, and MQYS…EAKA. Residues 492 to 516 show a composition bias toward acidic residues; sequence QEGEEEEEAAEQDEGESEDEEEDGK. Residues 521 to 531 are compositionally biased toward low complexity; that stretch reads AEYPPALLAAA. Basic and acidic residues-rich tracts occupy residues 576-585 and 605-616; these read QKEKKGEEDL and NREKAAEKEKLE. Residues 595–632 are a coiled coil; sequence AKLYEKMQYSNREKAAEKEKLEKKRKAIEKRKAKEAKA.

The protein belongs to the pescadillo family. Component of the NOP7 complex, composed of ERB1, NOP7 and YTM1. The complex is held together by ERB1, which interacts with NOP7 via its N-terminal domain and with YTM1 via a high-affinity interaction between the seven-bladed beta-propeller domains of the 2 proteins. The NOP7 complex associates with the 66S pre-ribosome.

The protein localises to the nucleus. It localises to the nucleolus. The protein resides in the nucleoplasm. Component of the NOP7 complex, which is required for maturation of the 25S and 5.8S ribosomal RNAs and formation of the 60S ribosome. This Cryptococcus neoformans var. neoformans serotype D (strain B-3501A) (Filobasidiella neoformans) protein is Pescadillo homolog.